The following is a 461-amino-acid chain: Ubiquinone hydroxylase UbiM (461 aa).

The protein belongs to the UbiH/COQ6 family. FAD is required as a cofactor.

The catalysed reaction is a 2-(all-trans-polyprenyl)phenol + NADPH + O2 + H(+) = a 3-(all-trans-polyprenyl)benzene-1,2-diol + NADP(+) + H2O. It catalyses the reaction a 5-methoxy-2-methyl-3-(all-trans-polyprenyl)benzene-1,4-diol + AH2 + O2 = a 3-demethylubiquinol + A + H2O. It functions in the pathway cofactor biosynthesis; ubiquinone biosynthesis. Catalyzes the hydroxylation of three positions of the aromatic ring during ubiquinone biosynthesis. The protein is Ubiquinone hydroxylase UbiM of Neisseria meningitidis serogroup C / serotype 2a (strain ATCC 700532 / DSM 15464 / FAM18).